A 421-amino-acid chain; its full sequence is Solute carrier family 35 member F3 (421 aa).

A disordered region spans residues 25–53; sequence EGEERPREPPGPAEAQAPAGTEAGGRTSR. Low complexity predominate over residues 37-49; the sequence is AEAQAPAGTEAGG. Helical transmembrane passes span 66–86, 98–118, 149–169, 179–199, 208–228, 232–252, 266–286, 305–325, 326–346, and 352–372; these read VFWG…STQL, FTLT…YYAG, VFFT…YLYL, DVSV…WIVL, IVAA…DGFH, VIGI…KVLF, LFLS…PVIL, LCGF…GIAV, TYPT…AVVD, and IVFN…FLLL. The disordered stretch occupies residues 394–421; sequence KEETAESSGDLGTGPQSRSRRARPSFAR. The segment covering 411–421 has biased composition (basic residues); it reads RSRRARPSFAR.

Belongs to the SLC35F solute transporter family.

Its subcellular location is the membrane. It carries out the reaction thiamine(in) = thiamine(out). In terms of biological role, mediates thiamine transport. The chain is Solute carrier family 35 member F3 (Slc35f3) from Mus musculus (Mouse).